The sequence spans 274 residues: MQNITQSWFVQGMIKATTDAWLKGWDERNGGNLTLRLDDADIAPYHGNFHAQPRYIPLSQPMPLLANTPFIVTGSGKFFRNVQLDPAANLGVVKVDSDGAGYHILWGLTNEAVPTSELPAHFLSHCERIKATNGKDRVIMHCHATNLIALTYVLENDTAVFTRQLWEGSTECLVVFPDGVGILPWMVPGTDEIGQATAQEMQKHSLVLWPFHGVFGSGSTLDETFGLIDTAEKSAQVLVKVYSMGGMKQTISREELIALGKRFGVTPLASALAL.

The active site involves Glu117. Positions 141, 143, and 212 each coordinate Zn(2+).

It belongs to the aldolase class II family. RhaD subfamily. Homotetramer. It depends on Zn(2+) as a cofactor.

The protein resides in the cytoplasm. The catalysed reaction is L-rhamnulose 1-phosphate = (S)-lactaldehyde + dihydroxyacetone phosphate. Its pathway is carbohydrate degradation; L-rhamnose degradation; glycerone phosphate from L-rhamnose: step 3/3. Functionally, catalyzes the reversible cleavage of L-rhamnulose-1-phosphate to dihydroxyacetone phosphate (DHAP) and L-lactaldehyde. This chain is Rhamnulose-1-phosphate aldolase, found in Shigella sonnei (strain Ss046).